We begin with the raw amino-acid sequence, 761 residues long: Cytoplasmic export protein 1 (761 aa).

HEAT repeat units lie at residues 385 to 423 (IYPHFIQGLTDSDATLRLQTLKTIPCIVSCLTERQLNNE) and 498 to 534 (NTIANKILTVIAPGLLDKSPIVRGRAKILFEEYLEKL). 2 disordered regions span residues 660 to 692 (DDGWIQDESGPSKVPQKHTRPQNSTLAKSIAPS) and 714 to 761 (STVT…DTNW). Composition is skewed to polar residues over residues 680–692 (PQNSTLAKSIAPS) and 714–737 (STVTTKSSLSNKTARSKPISSIRG). The span at 747–761 (GWDDDGDSDSWDTNW) shows a compositional bias: acidic residues. At S754 the chain carries Phosphoserine.

As to quaternary structure, associates with the nuclear pore complex (NPC). Interacts with GSP1, LOS1, MSN5, NUP116 and TEF2.

It localises to the cytoplasm. In terms of biological role, component of the nuclear tRNA export machinery that my collect tRNA from the nuclear tRNA export receptors of the aminoacylation-dependent export and may deliver aminoacylated tRNAs to the translation machinery pathway at the nuclear pore complex. The chain is Cytoplasmic export protein 1 (CEX1) from Saccharomyces cerevisiae (strain ATCC 204508 / S288c) (Baker's yeast).